Here is a 179-residue protein sequence, read N- to C-terminus: Small ribosomal subunit protein eS10x (179 aa).

Positions 90-179 (TLKKSAKPGG…AAAPSGSGLP (90 aa)) are disordered. A compositionally biased stretch (basic and acidic residues) spans 108 to 129 (DRSRGPRHEGGDRPRFGDRDGY). Positions 134–144 (RAGGEFGGEKG) are enriched in gly residues. Low complexity predominate over residues 145–156 (GAPADYQPSFQG). Gly residues predominate over residues 157–167 (SGRGFGRGAGG). The span at 168 to 179 (YSAAAPSGSGLP) shows a compositional bias: low complexity.

Belongs to the eukaryotic ribosomal protein eS10 family.

The protein resides in the cytoplasm. The polypeptide is Small ribosomal subunit protein eS10x (RPS10C) (Arabidopsis thaliana (Mouse-ear cress)).